The sequence spans 277 residues: Intercellular adhesion molecule 2 (277 aa).

An N-terminal signal peptide occupies residues 1-22 (MSSFACWSLSLLILFYSPGSGE). The Extracellular portion of the chain corresponds to 23–222 (KAFEVYIWSE…EVYEPMQDNQ (200 aa)). Ig-like C2-type domains lie at 39–98 (TESW…CSGK) and 127–196 (GEDF…LDLR). Asn45, Asn82, Asn158, Asn176, and Asn186 each carry an N-linked (GlcNAc...) asparagine glycan. 3 disulfide bridges follow: Cys46-Cys91, Cys50-Cys95, and Cys134-Cys189. A helical transmembrane segment spans residues 223 to 247 (MVIIIVVVSILLFLFVTSVLLCFIF). Topologically, residues 248–277 (GQHWHRRRTGTYGVLAAWRRLPRAFRARPV) are cytoplasmic. Residues 250 to 277 (HWHRRRTGTYGVLAAWRRLPRAFRARPV) form a required for interaction with EZR, MSN and RDX and co-localization to microvilli region.

Belongs to the immunoglobulin superfamily. ICAM family. As to quaternary structure, interacts with RDX, EZR and MSN. In terms of tissue distribution, expressed in endothelial cells and leukocytes. High levels found in lung.

Its subcellular location is the membrane. The protein localises to the cell projection. The protein resides in the microvillus. ICAM proteins are ligands for the leukocyte adhesion protein LFA-1 (integrin alpha-L/beta-2). ICAM2 may play a role in lymphocyte recirculation by blocking LFA-1-dependent cell adhesion. It mediates adhesive interactions important for antigen-specific immune response, NK-cell mediated clearance, lymphocyte recirculation, and other cellular interactions important for immune response and surveillance. In Mus musculus (Mouse), this protein is Intercellular adhesion molecule 2 (Icam2).